Consider the following 577-residue polypeptide: DNA primase (577 aa).

A CHC2-type zinc finger spans residues 40 to 64 (CPFHHDKTPSFTVSNEKQFYYCFGC). The Toprim domain occupies 255-337 (VYLLVVEGYI…KKTLKFILLP (83 aa)). The Mg(2+) site is built by E261, D305, and D307.

This sequence belongs to the DnaG primase family. Monomer. Interacts with DnaB. Zn(2+) is required as a cofactor. Mg(2+) serves as cofactor.

The catalysed reaction is ssDNA + n NTP = ssDNA/pppN(pN)n-1 hybrid + (n-1) diphosphate.. Its function is as follows. RNA polymerase that catalyzes the synthesis of short RNA molecules used as primers for DNA polymerase during DNA replication. The chain is DNA primase from Buchnera aphidicola subsp. Acyrthosiphon pisum (strain APS) (Acyrthosiphon pisum symbiotic bacterium).